The following is a 206-amino-acid chain: HTH-type transcriptional regulator Hpr (206 aa).

Residues 13-157 form the HTH marR-type domain; that stretch reads ALLFSQRMAQ…MMSIIRHIYG (145 aa). A DNA-binding region (H-T-H motif) is located at residues 63 to 86; that stretch reads ISEIAKFGVMHVSTAFNFSKKLEE. Residues 177–206 are disordered; the sequence is SEEGKMKKKQEAKEAGESIEVDKPLEPLKN. Over residues 178 to 206 the composition is skewed to basic and acidic residues; that stretch reads EEGKMKKKQEAKEAGESIEVDKPLEPLKN.

Homodimer.

Functionally, negative regulator of protease production and sporulation. In Bacillus licheniformis (strain ATCC 14580 / DSM 13 / JCM 2505 / CCUG 7422 / NBRC 12200 / NCIMB 9375 / NCTC 10341 / NRRL NRS-1264 / Gibson 46), this protein is HTH-type transcriptional regulator Hpr.